The chain runs to 638 residues: MEIIRSNFKSNLHKVYQAIEEADFFAIDGEFSGISDGPSVTALTNGFDTPEERYQKLKKHSMDFLLFQFGLCTFKYDYTDSKYITKSFNFYVFPKPFNRSSPDVKFVCQSSSIDFLASQGFDFNKVFRNGIPYLNQEEERQLREQYDEKRSQSNGAGALSYTSPNTSKCPVTIPDDQKKFIDQVVEKIEDLLQSEENKNLDLEPCTGFQRKLIYQTLSWKYPKGIHVETLETEKKERYIVISKVDEEERKRREQQKHAKEQEELNDAVGFSRVIHAIANSGKLVIGHNMLLDVMHTVHQFYCPLPADLNEFKEMTTCVFPRLLDTKLMASTQPFKDIINNTSLAELEKRLKETPFNPPKVESAEGFPSYDTASEQLHEAGYDAYITGLCFISMANYLGSFLSPPKSHVSARSKLIEPFFNKLFLMRVMDIPYLNLEGPDLQPKRDHVLHVTFPKEWKTSDLYQLFSAFGNIQISWIDDTSAFVSLSQPEQVPIAVNTSKYAESYRIQTYADYVGKKREEKQMKRKWTEDSWKEVEPKRLNTQCGSYSLQNHHYHANSLTATSTVGKRNLSPSRAEAGLEARASGEISDTELEQTDPCAEPLSEGRKKAKKLKRMKKDLSPTGSISDSSAKLFEVPDTW.

Residues D28 and E30 each coordinate a divalent metal cation. The tract at residues 143-165 is disordered; sequence REQYDEKRSQSNGAGALSYTSPN. Over residues 152–165 the composition is skewed to polar residues; that stretch reads QSNGAGALSYTSPN. A phosphoserine mark is found at S163 and S167. Residues 178–245 enclose the R3H domain; the sequence is KKFIDQVVEK…ERYIVISKVD (68 aa). K220 bears the N6-acetyllysine mark. A divalent metal cation contacts are provided by D292 and D382. K499 is modified (N6-acetyllysine). S530 bears the Phosphoserine mark. A Phosphoserine; by MAPKAPK2 modification is found at S557. Residues 573 to 638 form a disordered region; the sequence is RAEAGLEARA…AKLFEVPDTW (66 aa). Residues S583 and S587 each carry the phosphoserine modification. Over residues 606–615 the composition is skewed to basic residues; it reads KKAKKLKRMK. 3 positions are modified to phosphoserine: S619, S623, and S627.

It belongs to the CAF1 family. As to quaternary structure, homodimer. Found in a mRNA decay complex with RENT1, RENT2 and RENT3B. Interacts with KHSRP. Interacts with CELF1/CUGBP1. Interacts with ZC3HAV1 in an RNA-independent manner. Interacts with DHX36. Requires Mg(2+) as cofactor. Post-translationally, phosphorylation by MAPKAPK2, preventing GADD45A mRNA degradation after genotoxic stress.

Its subcellular location is the nucleus. The protein resides in the cytoplasm. The protein localises to the nucleolus. It carries out the reaction Exonucleolytic cleavage of poly(A) to 5'-AMP.. Its function is as follows. 3'-exoribonuclease that has a preference for poly(A) tails of mRNAs, thereby efficiently degrading poly(A) tails. Exonucleolytic degradation of the poly(A) tail is often the first step in the decay of eukaryotic mRNAs and is also used to silence certain maternal mRNAs translationally during oocyte maturation and early embryonic development. Involved in nonsense-mediated mRNA decay, a critical process of selective degradation of mRNAs that contain premature stop codons. Also involved in degradation of inherently unstable mRNAs that contain AU-rich elements (AREs) in their 3'-UTR, possibly via its interaction with KHSRP. Probably mediates the removal of poly(A) tails of AREs mRNAs, which constitutes the first step of destabilization. Interacts with both the 3'-end poly(A) tail and the 5'-end cap structure during degradation, the interaction with the cap structure being required for an efficient degradation of poly(A) tails. Also able to recognize poly(A) tails of microRNAs such as MIR21 and H/ACA box snoRNAs (small nucleolar RNAs) leading to microRNAs degradation or snoRNA increased stability. This chain is Poly(A)-specific ribonuclease PARN (PARN), found in Bos taurus (Bovine).